A 555-amino-acid chain; its full sequence is Probable terpene synthase 6 (555 aa).

Positions 309, 313, and 460 each coordinate Mg(2+). The DDXXD motif motif lies at 309-313 (DDTYD).

The protein belongs to the terpene synthase family. Requires Mg(2+) as cofactor.

Probable sesquiterpene synthase. The protein is Probable terpene synthase 6 (TPS6) of Ricinus communis (Castor bean).